Here is a 167-residue protein sequence, read N- to C-terminus: Disulfide bond formation protein B (167 aa).

The Cytoplasmic portion of the chain corresponds to 1–12 (MFLNLLDAPRRL). The chain crosses the membrane as a helical span at residues 13-29 (LALVALGCVALLAFGLY). At 30–47 (LQHVVGLEPCPMCIVQRY) the chain is on the periplasmic side. Residues Cys39 and Cys42 are joined by a disulfide bond. A helical membrane pass occupies residues 48–63 (ALVLVAIVAGLTAITS). At 64-69 (NKKGLI) the chain is on the cytoplasmic side. The helical transmembrane segment at 70–87 (TGSGVLLLLAGFGAFVAA) threads the bilayer. Topologically, residues 88-143 (RQSFLQWYPPEVASCGRDFYGMIETFPLQRAIPMIFKGSGDCAKVDWTFLGGSIAN) are periplasmic. The cysteines at positions 102 and 129 are disulfide-linked. A helical membrane pass occupies residues 144–162 (WSFVCFAVIGLTALTLIAR). Residues 163–167 (LARQR) are Cytoplasmic-facing.

Belongs to the DsbB family.

The protein resides in the cell inner membrane. In terms of biological role, required for disulfide bond formation in some periplasmic proteins. Acts by oxidizing the DsbA protein. This Polaromonas naphthalenivorans (strain CJ2) protein is Disulfide bond formation protein B.